Consider the following 184-residue polypeptide: Ribosome-recycling factor (184 aa).

Belongs to the RRF family.

Its subcellular location is the cytoplasm. Responsible for the release of ribosomes from messenger RNA at the termination of protein biosynthesis. May increase the efficiency of translation by recycling ribosomes from one round of translation to another. This Psychrobacter arcticus (strain DSM 17307 / VKM B-2377 / 273-4) protein is Ribosome-recycling factor.